Here is a 37-residue protein sequence, read N- to C-terminus: Cytochrome b6-f complex subunit 5 (37 aa).

The helical transmembrane segment at 5–25 threads the bilayer; that stretch reads FLFGIVLGLIPITLAGLFVTA.

Belongs to the PetG family. As to quaternary structure, the 4 large subunits of the cytochrome b6-f complex are cytochrome b6, subunit IV (17 kDa polypeptide, PetD), cytochrome f and the Rieske protein, while the 4 small subunits are PetG, PetL, PetM and PetN. The complex functions as a dimer.

Its subcellular location is the plastid. It localises to the chloroplast thylakoid membrane. Its function is as follows. Component of the cytochrome b6-f complex, which mediates electron transfer between photosystem II (PSII) and photosystem I (PSI), cyclic electron flow around PSI, and state transitions. PetG is required for either the stability or assembly of the cytochrome b6-f complex. This is Cytochrome b6-f complex subunit 5 from Capsella bursa-pastoris (Shepherd's purse).